Consider the following 171-residue polypeptide: Sorcin (171 aa).

4 EF-hand domains span residues Met-3 to Thr-38, Leu-40 to Phe-69, Lys-70 to His-105, and Leu-106 to Leu-140. Positions 16, 18, 20, 22, 27, 53, 55, 57, 59, 64, 83, 85, 87, 89, and 94 each coordinate Ca(2+).

The protein localises to the cytoplasm. Functionally, calcium-binding protein. The polypeptide is Sorcin (Schistosoma japonicum (Blood fluke)).